A 639-amino-acid chain; its full sequence is Chaperone protein DnaK (639 aa).

Thr197 is subject to Phosphothreonine; by autocatalysis. The interval 600 to 639 (SGAQGGAQAGPDMNAGQSNAGQNNGKQDDNVQDADFEEVK) is disordered. The span at 613 to 624 (NAGQSNAGQNNG) shows a compositional bias: low complexity. The segment covering 629 to 639 (NVQDADFEEVK) has biased composition (acidic residues).

The protein belongs to the heat shock protein 70 family.

Its function is as follows. Acts as a chaperone. In Bacteroides fragilis (strain ATCC 25285 / DSM 2151 / CCUG 4856 / JCM 11019 / LMG 10263 / NCTC 9343 / Onslow / VPI 2553 / EN-2), this protein is Chaperone protein DnaK.